The sequence spans 515 residues: Centromere protein T (515 aa).

Disordered regions lie at residues 24 to 156 and 271 to 411; these read ADSR…KRKQ and LSGK…DPHK. Over residues 29-44 the composition is skewed to basic residues; it reads PMRRRSTRINAQRRRS. Over residues 45–58 the composition is skewed to polar residues; it reads QTPYSNRQGSQTKT. Position 86 is a phosphothreonine (Thr86). A flexible stalk domain region spans residues 94 to 375; the sequence is ILLTAPESST…DSLPAEQPPP (282 aa). Residues 296–306 are compositionally biased toward polar residues; that stretch reads SSGTRLQSRMS. Ser313, Ser333, Ser345, Ser346, Ser357, and Ser376 each carry phosphoserine.

Belongs to the CENP-T/CNN1 family. As to quaternary structure, component of the CENPA-CAD complex, composed of CENPI, CENPK, CENPL, CENPO, CENPP, CENPQ, CENPR and CENPS. The CENPA-CAD complex is probably recruited on centromeres by the CENPA-NAC complex, at least composed of CENPA, CENPC, CENPH, CENPM, CENPN, CENPT and CENPU. Identified in a centromeric complex containing histones H2A, H2B, H3 and H4, and at least CENPA, CENPB, CENPC, CENPT, CENPN, HJURP, SUPT16H, SSRP1 and RSF1. Interacts (via N-terminus) with the NDC80 complex. Heterodimer with CENPW; this dimer coassembles with CENPS-CENPX heterodimers at centromeres to form the tetrameric CENP-T-W-S-X complex. Dynamically phosphorylated during the cell cycle. Phosphorylated during G2 phase, metaphase and anaphase, but not during telophase or G1 phase.

The protein resides in the nucleus. The protein localises to the chromosome. Its subcellular location is the centromere. It localises to the kinetochore. Component of the CENPA-NAC (nucleosome-associated) complex, a complex that plays a central role in assembly of kinetochore proteins, mitotic progression and chromosome segregation. The CENPA-NAC complex recruits the CENPA-CAD (nucleosome distal) complex and may be involved in incorporation of newly synthesized CENPA into centromeres. Part of a nucleosome-associated complex that binds specifically to histone H3-containing nucleosomes at the centromere, as opposed to nucleosomes containing CENPA. Component of the heterotetrameric CENP-T-W-S-X complex that binds and supercoils DNA, and plays an important role in kinetochore assembly. CENPT has a fundamental role in kinetochore assembly and function. It is one of the inner kinetochore proteins, with most further proteins binding downstream. Required for normal chromosome organization and normal progress through mitosis. The sequence is that of Centromere protein T (Cenpt) from Mus musculus (Mouse).